Consider the following 530-residue polypeptide: Membrane-associated transporter protein (530 aa).

Residues 1–46 (MGSNSGQAGRHIYKSLADDGPFDSVEPPKRPTSRLIMHSMAMFGRE) lie on the Cytoplasmic side of the membrane. A helical membrane pass occupies residues 47–67 (FCYAVEAAYVTPVLLSVGLPS). Residue serine 68 is a topological domain, extracellular. Residues 69-89 (LYSIVWFLSPILGFLLQPVVG) form a helical membrane-spanning segment. The Cytoplasmic portion of the chain corresponds to 90-110 (SASDHCRSRWGRRRPYILTLG). A helical membrane pass occupies residues 111–131 (VMMLVGMALYLNGATVVAALI). The Extracellular portion of the chain corresponds to 132–138 (ANPRRKL). Residues 139-159 (VWAISVTMIGVVLFDFAADFI) form a helical membrane-spanning segment. Residues 160–184 (DGPIKAYLFDVCSHQDKEKGLHYHA) lie on the Cytoplasmic side of the membrane. The helical transmembrane segment at 185 to 205 (LFTGFGGALGYLLGAIDWAHL) threads the bilayer. The Extracellular segment spans residues 206-216 (ELGRLLGTEFQ). Residues 217–237 (VMFFFSALVLTLCFTVHLCSI) form a helical membrane-spanning segment. At 238 to 318 (SEAPLTEVAK…ALVNMPPHYR (81 aa)) the chain is on the cytoplasmic side. A helical membrane pass occupies residues 319-339 (YLCISHLIGWTAFLSNMLFFT). The Extracellular segment spans residues 340 to 366 (DFMGQIVYRGDPYSAHNSTEFLIYERG). N-linked (GlcNAc...) asparagine glycosylation occurs at asparagine 356. The chain crosses the membrane as a helical span at residues 367–387 (VEVGCWGLCINSVFSSLYSYF). Residues 388–398 (QKVLVSYIGLK) are Cytoplasmic-facing. The helical transmembrane segment at 399 to 419 (GLYFTGYLLFGLGTGFIGLFP) threads the bilayer. Residues 420–425 (NVYSTL) lie on the Extracellular side of the membrane. A helical membrane pass occupies residues 426 to 446 (VLCSLFGVMSSTLYTVPFNLI). The Cytoplasmic portion of the chain corresponds to 447-477 (TEYHREEEKERQQAPGGDPDNSVRGKGMDCA). The helical transmembrane segment at 478 to 498 (TLTCMVQLAQILVGGGLGFLV) threads the bilayer. Topologically, residues 499–504 (NTAGTV) are extracellular. Residues 505–525 (VVVVITASAVALIGCCFVALF) form a helical membrane-spanning segment. The Cytoplasmic segment spans residues 526–530 (VRYVD).

The protein belongs to the glycoside-pentoside-hexuronide (GPH) cation symporter transporter (TC 2.A.2) family. In terms of assembly, interacts with TYRP1. In terms of tissue distribution, expressed in mature melanocytes.

It is found in the melanosome membrane. The enzyme catalyses sucrose(out) + H(+)(out) = sucrose(in) + H(+)(in). It catalyses the reaction D-glucose(out) + H(+)(out) = D-glucose(in) + H(+)(in). Functionally, proton-associated glucose and sucrose transporter. May be able to transport also fructose. Expressed at a late melanosome maturation stage where functions as proton/glucose exporter which increase lumenal pH by decreasing glycolysis. Regulates melanogenesis by maintaining melanosome neutralization that is initially initiated by transient OCA2 and required for a proper function of the tyrosinase TYR. In Homo sapiens (Human), this protein is Membrane-associated transporter protein.